Reading from the N-terminus, the 167-residue chain is Endoribonuclease YbeY (167 aa).

Zn(2+)-binding residues include His-131, His-135, and His-141.

It belongs to the endoribonuclease YbeY family. Zn(2+) is required as a cofactor.

The protein localises to the cytoplasm. Its function is as follows. Single strand-specific metallo-endoribonuclease involved in late-stage 70S ribosome quality control and in maturation of the 3' terminus of the 16S rRNA. The sequence is that of Endoribonuclease YbeY from Rickettsia prowazekii (strain Madrid E).